The primary structure comprises 652 residues: Chaperone protein HtpG (652 aa).

Positions 1–351 (MTEHVEQLEF…AQDLSLNVSR (351 aa)) are a; substrate-binding. The tract at residues 352-568 (EILQQDRQIQ…VFDFTPMLER (217 aa)) is b. A c region spans residues 569-652 (MYRASGQPVP…ILTDRLTRTL (84 aa)).

Belongs to the heat shock protein 90 family. In terms of assembly, homodimer.

Its subcellular location is the cytoplasm. Its function is as follows. Molecular chaperone. Has ATPase activity. The protein is Chaperone protein HtpG of Nocardia farcinica (strain IFM 10152).